The following is a 239-amino-acid chain: tRNA uridine(34) hydroxylase (239 aa).

Residues Gln-124–Asp-214 enclose the Rhodanese domain. The active-site Cysteine persulfide intermediate is Cys-178.

The protein belongs to the TrhO family.

It carries out the reaction uridine(34) in tRNA + AH2 + O2 = 5-hydroxyuridine(34) in tRNA + A + H2O. In terms of biological role, catalyzes oxygen-dependent 5-hydroxyuridine (ho5U) modification at position 34 in tRNAs. The sequence is that of tRNA uridine(34) hydroxylase from Bordetella parapertussis (strain 12822 / ATCC BAA-587 / NCTC 13253).